A 747-amino-acid polypeptide reads, in one-letter code: Myotubularin-related protein 12 (747 aa).

One can recognise a Myotubularin phosphatase domain in the interval 205-643 (FDTLKDWCWE…PEIKVWAQRY (439 aa)). Positions 449–558 (VPVFLLFLDC…KGQRKGMRFK (110 aa)) are interaction with MTM1. Phosphoserine is present on residues S564, S601, and S716.

Belongs to the protein-tyrosine phosphatase family. Non-receptor class myotubularin subfamily. As to quaternary structure, heterodimer with lipid phosphatase MTM1. Heterodimer with lipid phosphatase MTMR2. In terms of tissue distribution, expressed in skeletal muscles (at protein level). Ubiquitous with prominent expression in brain, heart, kidney, placenta, and lung.

The protein resides in the cytoplasm. It is found in the sarcoplasmic reticulum. It localises to the myofibril. Its subcellular location is the sarcomere. Its function is as follows. Acts as an adapter for the myotubularin-related phosphatases. Regulates phosphatase MTM1 protein stability and possibly its intracellular location. By stabilizing MTM1 protein levels, required for skeletal muscle maintenance but not for myogenesis. The polypeptide is Myotubularin-related protein 12 (MTMR12) (Homo sapiens (Human)).